Here is a 131-residue protein sequence, read N- to C-terminus: Peptide methionine sulfoxide reductase MsrB (131 aa).

In terms of domain architecture, MsrB spans 8–130; the sequence is LEEWKEMLDP…NSVCLDLVPR (123 aa). 4 residues coordinate Zn(2+): Cys-47, Cys-50, Cys-96, and Cys-99. The active-site Nucleophile is the Cys-119.

Belongs to the MsrB Met sulfoxide reductase family. Zn(2+) serves as cofactor.

It carries out the reaction L-methionyl-[protein] + [thioredoxin]-disulfide + H2O = L-methionyl-(R)-S-oxide-[protein] + [thioredoxin]-dithiol. The chain is Peptide methionine sulfoxide reductase MsrB from Pseudomonas savastanoi pv. phaseolicola (strain 1448A / Race 6) (Pseudomonas syringae pv. phaseolicola (strain 1448A / Race 6)).